The sequence spans 223 residues: Adenylate kinase (223 aa).

ATP is bound at residue 10–15 (GSGKGT). An NMP region spans residues 30–59 (ESGAIFRQHIGGGTELGKKAKEYIDRGDLV). AMP is bound by residues S31, R36, 57–59 (DLV), 84–87 (GFPR), and Q91. Residues 125-164 (GRRLCKNDNNHPNNIFIDAIKPDGDVCRVCGGSLSARADD) are LID. R126 contributes to the ATP binding site. Residues R161 and R173 each contribute to the AMP site. G209 contributes to the ATP binding site.

The protein belongs to the adenylate kinase family. As to quaternary structure, monomer.

It localises to the cytoplasm. It catalyses the reaction AMP + ATP = 2 ADP. The protein operates within purine metabolism; AMP biosynthesis via salvage pathway; AMP from ADP: step 1/1. Functionally, catalyzes the reversible transfer of the terminal phosphate group between ATP and AMP. Plays an important role in cellular energy homeostasis and in adenine nucleotide metabolism. This chain is Adenylate kinase, found in Nitratidesulfovibrio vulgaris (strain DSM 19637 / Miyazaki F) (Desulfovibrio vulgaris).